The following is a 495-amino-acid chain: Ribose import ATP-binding protein RbsA 3 (495 aa).

2 ABC transporter domains span residues 5–240 (VRLR…VGRE) and 250–492 (AEIG…TGVK). Residue 37–44 (GENGAGKS) participates in ATP binding.

Belongs to the ABC transporter superfamily. Ribose importer (TC 3.A.1.2.1) family. As to quaternary structure, the complex is composed of an ATP-binding protein (RbsA), two transmembrane proteins (RbsC) and a solute-binding protein (RbsB).

Its subcellular location is the cell membrane. The enzyme catalyses D-ribose(out) + ATP + H2O = D-ribose(in) + ADP + phosphate + H(+). Part of the ABC transporter complex RbsABC involved in ribose import. Responsible for energy coupling to the transport system. The sequence is that of Ribose import ATP-binding protein RbsA 3 from Rubrobacter xylanophilus (strain DSM 9941 / JCM 11954 / NBRC 16129 / PRD-1).